A 577-amino-acid polypeptide reads, in one-letter code: Beta-fructofuranosidase, insoluble isoenzyme 1 (577 aa).

An N-terminal signal peptide occupies residues 1–22; the sequence is MGTRLLALAPWLLLLLLQLAGA. D63 is a catalytic residue. N-linked (GlcNAc...) asparagine glycosylation is found at N158, N183, and N333.

It belongs to the glycosyl hydrolase 32 family.

The protein resides in the secreted. The protein localises to the extracellular space. It is found in the apoplast. Its subcellular location is the cell wall. It carries out the reaction Hydrolysis of terminal non-reducing beta-D-fructofuranoside residues in beta-D-fructofuranosides.. Its function is as follows. May play a role in sucrose partitioning during seed development and in stress response. The protein is Beta-fructofuranosidase, insoluble isoenzyme 1 (CIN1) of Oryza sativa subsp. indica (Rice).